The following is a 129-amino-acid chain: MARVTVEDCVDKVENRFELVLLASHRARMIAAGAPITIDRDNDKNPVVSLREIADSTLTPDDLKEDLIQSLQKHVEVDEPESEVVPALSSAPQNPEAIGDIQFDRMTEEDLLRGLEGLVPPAETEDDSE.

The segment at 77-98 (VDEPESEVVPALSSAPQNPEAI) is disordered.

Belongs to the RNA polymerase subunit omega family. In terms of assembly, the RNAP catalytic core consists of 2 alpha, 1 beta, 1 beta' and 1 omega subunit. When a sigma factor is associated with the core the holoenzyme is formed, which can initiate transcription.

It catalyses the reaction RNA(n) + a ribonucleoside 5'-triphosphate = RNA(n+1) + diphosphate. Promotes RNA polymerase assembly. Latches the N- and C-terminal regions of the beta' subunit thereby facilitating its interaction with the beta and alpha subunits. The protein is DNA-directed RNA polymerase subunit omega of Methylocella silvestris (strain DSM 15510 / CIP 108128 / LMG 27833 / NCIMB 13906 / BL2).